The primary structure comprises 26 residues: Phospholipase A2 homolog A1 (26 aa).

In terms of processing, contains 7 disulfide bonds. As to expression, expressed by the venom gland.

The protein localises to the secreted. The sequence is that of Phospholipase A2 homolog A1 from Micrurus pyrrhocryptus (Coral snake).